The sequence spans 375 residues: Anhydro-N-acetylmuramic acid kinase (375 aa).

18–25 is a binding site for ATP; the sequence is GTSMDGID.

This sequence belongs to the anhydro-N-acetylmuramic acid kinase family.

The catalysed reaction is 1,6-anhydro-N-acetyl-beta-muramate + ATP + H2O = N-acetyl-D-muramate 6-phosphate + ADP + H(+). It functions in the pathway amino-sugar metabolism; 1,6-anhydro-N-acetylmuramate degradation. The protein operates within cell wall biogenesis; peptidoglycan recycling. In terms of biological role, catalyzes the specific phosphorylation of 1,6-anhydro-N-acetylmuramic acid (anhMurNAc) with the simultaneous cleavage of the 1,6-anhydro ring, generating MurNAc-6-P. Is required for the utilization of anhMurNAc either imported from the medium or derived from its own cell wall murein, and thus plays a role in cell wall recycling. This Rhodospirillum rubrum (strain ATCC 11170 / ATH 1.1.1 / DSM 467 / LMG 4362 / NCIMB 8255 / S1) protein is Anhydro-N-acetylmuramic acid kinase.